The following is a 357-amino-acid chain: Phosphoribosylformylglycinamidine cyclo-ligase (357 aa).

It belongs to the AIR synthase family.

The protein resides in the cytoplasm. It catalyses the reaction 2-formamido-N(1)-(5-O-phospho-beta-D-ribosyl)acetamidine + ATP = 5-amino-1-(5-phospho-beta-D-ribosyl)imidazole + ADP + phosphate + H(+). It participates in purine metabolism; IMP biosynthesis via de novo pathway; 5-amino-1-(5-phospho-D-ribosyl)imidazole from N(2)-formyl-N(1)-(5-phospho-D-ribosyl)glycinamide: step 2/2. The sequence is that of Phosphoribosylformylglycinamidine cyclo-ligase from Rhizobium leguminosarum.